The chain runs to 152 residues: UPF0266 membrane protein KPK_1957 (152 aa).

Transmembrane regions (helical) follow at residues 6-26 (LVII…QFIM), 45-65 (VDGL…ITQH), and 67-87 (TPIT…LFWI).

Belongs to the UPF0266 family.

It localises to the cell inner membrane. The protein is UPF0266 membrane protein KPK_1957 of Klebsiella pneumoniae (strain 342).